We begin with the raw amino-acid sequence, 405 residues long: Argininosuccinate synthase (405 aa).

Residue 11–19 coordinates ATP; sequence AYSGGLDTS. Residue tyrosine 90 participates in L-citrulline binding. An ATP-binding site is contributed by glycine 119. Threonine 121, asparagine 125, and aspartate 126 together coordinate L-aspartate. Asparagine 125 lines the L-citrulline pocket. The L-citrulline site is built by arginine 129, serine 178, serine 187, glutamate 263, and tyrosine 275.

It belongs to the argininosuccinate synthase family. Type 1 subfamily. Homotetramer.

The protein resides in the cytoplasm. It catalyses the reaction L-citrulline + L-aspartate + ATP = 2-(N(omega)-L-arginino)succinate + AMP + diphosphate + H(+). Its pathway is amino-acid biosynthesis; L-arginine biosynthesis; L-arginine from L-ornithine and carbamoyl phosphate: step 2/3. The chain is Argininosuccinate synthase from Legionella pneumophila subsp. pneumophila (strain Philadelphia 1 / ATCC 33152 / DSM 7513).